A 200-amino-acid chain; its full sequence is Protein GrpE (200 aa).

2 stretches are compositionally biased toward acidic residues: residues 1 to 17 and 34 to 44; these read MNEQ…EQFD and AFAEAGEETRD. The tract at residues 1-49 is disordered; that stretch reads MNEQPNEELQSEDEQFDPQETVSFEGETAANDEAFAEAGEETRDEEMTR.

Belongs to the GrpE family. In terms of assembly, homodimer.

The protein resides in the cytoplasm. Functionally, participates actively in the response to hyperosmotic and heat shock by preventing the aggregation of stress-denatured proteins, in association with DnaK and GrpE. It is the nucleotide exchange factor for DnaK and may function as a thermosensor. Unfolded proteins bind initially to DnaJ; upon interaction with the DnaJ-bound protein, DnaK hydrolyzes its bound ATP, resulting in the formation of a stable complex. GrpE releases ADP from DnaK; ATP binding to DnaK triggers the release of the substrate protein, thus completing the reaction cycle. Several rounds of ATP-dependent interactions between DnaJ, DnaK and GrpE are required for fully efficient folding. This Rhodopirellula baltica (strain DSM 10527 / NCIMB 13988 / SH1) protein is Protein GrpE.